A 391-amino-acid polypeptide reads, in one-letter code: Tryptophan synthase beta chain 2 (391 aa).

N6-(pyridoxal phosphate)lysine is present on K83.

Belongs to the TrpB family. In terms of assembly, tetramer of two alpha and two beta chains. Pyridoxal 5'-phosphate is required as a cofactor.

The enzyme catalyses (1S,2R)-1-C-(indol-3-yl)glycerol 3-phosphate + L-serine = D-glyceraldehyde 3-phosphate + L-tryptophan + H2O. Its pathway is amino-acid biosynthesis; L-tryptophan biosynthesis; L-tryptophan from chorismate: step 5/5. The beta subunit is responsible for the synthesis of L-tryptophan from indole and L-serine. The polypeptide is Tryptophan synthase beta chain 2 (trpB2) (Chlamydia caviae (strain ATCC VR-813 / DSM 19441 / 03DC25 / GPIC) (Chlamydophila caviae)).